Reading from the N-terminus, the 268-residue chain is MKRVALLVQYDGSYFSGWQRQKNAISVQEMIEDALFKVSNQMIKTFAAGRTDSGVHASGQVVHFDIDFVIPSDRYANVLNSRLPSTIRILESVEVKKNWHACYSAVYRHYRYVINNSKIPNLFLNKWSWHRYQKSLDEFLMSKALNGMIGEHDFYAFQKSGSTRSTSVTTIKSIEIERTEDLILIDIKATGFLYGMVRSIVGQLVLVGEKKISPEIFKDRWVGKKKQDVHESAPANGLCFVNSVYQETIFKRIDKNDLFPKFVIRGYS.

The active-site Nucleophile is Asp52. Tyr110 is a substrate binding site.

Belongs to the tRNA pseudouridine synthase TruA family. As to quaternary structure, homodimer.

It carries out the reaction uridine(38/39/40) in tRNA = pseudouridine(38/39/40) in tRNA. In terms of biological role, formation of pseudouridine at positions 38, 39 and 40 in the anticodon stem and loop of transfer RNAs. The sequence is that of tRNA pseudouridine synthase A from Prochlorococcus marinus (strain MIT 9515).